Consider the following 527-residue polypeptide: Probable feruloyl esterase B-2 (527 aa).

A signal peptide spans 1–19; it reads MAPIHYLLPIITLGSAALA. Intrachain disulfides connect cysteine 28/cysteine 75 and cysteine 63/cysteine 114. Asparagine 53, asparagine 85, asparagine 98, asparagine 138, and asparagine 180 each carry an N-linked (GlcNAc...) asparagine glycan. 4 disulfides stabilise this stretch: cysteine 187–cysteine 441, cysteine 256–cysteine 273, cysteine 282–cysteine 291, and cysteine 503–cysteine 525. The active-site Acyl-ester intermediate is serine 188. 5 residues coordinate Ca(2+): aspartate 257, aspartate 260, alanine 262, aspartate 264, and isoleucine 266. Asparagine 311 and asparagine 355 each carry an N-linked (GlcNAc...) asparagine glycan. Catalysis depends on charge relay system residues aspartate 400 and histidine 440. N-linked (GlcNAc...) asparagine glycosylation is present at asparagine 516.

It belongs to the tannase family.

The protein localises to the secreted. The catalysed reaction is feruloyl-polysaccharide + H2O = ferulate + polysaccharide.. Involved in degradation of plant cell walls. Hydrolyzes the feruloyl-arabinose ester bond in arabinoxylans as well as the feruloyl-galactose and feruloyl-arabinose ester bonds in pectin. The polypeptide is Probable feruloyl esterase B-2 (faeB-2) (Aspergillus terreus (strain NIH 2624 / FGSC A1156)).